The chain runs to 248 residues: MKLKIFTKNSPDAIEFSKYVKNLAENLGFKITENDPDVVLVIGGDGTLLRAVKDGIPILGVKFGRRSALLDIRPENIKEALELLQKNKYTIEEYPMLEAKSKNINTIAFNEIAILFNNPETVYGSVNIKERKILFEGDGVLIATPQGSWAWSYSATRVLLHKDINGIEITFINPIIPNIKALIIPQTETILVKLEDKGRTQNVRVISDGEIVGNLISKEDEELTITLSKRKAKILRFFNLIEFDGLFT.

The active-site Proton acceptor is Asp45. NAD(+) contacts are provided by residues 45-46 (DG), Arg50, 110-111 (NE), and Asp138.

It belongs to the NAD kinase family. Requires a divalent metal cation as cofactor.

It is found in the cytoplasm. It carries out the reaction NAD(+) + ATP = ADP + NADP(+) + H(+). Functionally, involved in the regulation of the intracellular balance of NAD and NADP, and is a key enzyme in the biosynthesis of NADP. Catalyzes specifically the phosphorylation on 2'-hydroxyl of the adenosine moiety of NAD to yield NADP. The polypeptide is NAD kinase (Sulfurisphaera tokodaii (strain DSM 16993 / JCM 10545 / NBRC 100140 / 7) (Sulfolobus tokodaii)).